Reading from the N-terminus, the 157-residue chain is Small ribosomal subunit protein uS7 (157 aa).

The protein belongs to the universal ribosomal protein uS7 family. As to quaternary structure, part of the 30S ribosomal subunit. Contacts proteins S9 and S11.

In terms of biological role, one of the primary rRNA binding proteins, it binds directly to 16S rRNA where it nucleates assembly of the head domain of the 30S subunit. Is located at the subunit interface close to the decoding center, probably blocks exit of the E-site tRNA. This Polaromonas naphthalenivorans (strain CJ2) protein is Small ribosomal subunit protein uS7.